Reading from the N-terminus, the 423-residue chain is Chitinase 1 (423 aa).

The N-terminal stretch at 1-22 (MLSFVKKSIALVAALQAVTALA) is a signal peptide. The propeptide occupies 23–34 (TPISSEAGVEKR). In terms of domain architecture, GH18 spans 38–401 (FANAVYFTNW…STSHQGLGSQ (364 aa)). Chitin-binding positions include 102–103 (GT) and 129–132 (GGWT). Glutamate 171 serves as the catalytic Proton donor. Residues tyrosine 172, 237 to 240 (MAYD), and tryptophan 378 each bind chitin.

It belongs to the glycosyl hydrolase 18 family. Chitinase class V subfamily.

Its subcellular location is the secreted. It carries out the reaction Random endo-hydrolysis of N-acetyl-beta-D-glucosaminide (1-&gt;4)-beta-linkages in chitin and chitodextrins.. This chain is Chitinase 1 (CHI1), found in Aphanocladium album (Wheat rust fungus).